A 1165-amino-acid polypeptide reads, in one-letter code: Chromosome partition protein Smc (1165 aa).

Residue 32–39 (PNGSGKSN) coordinates ATP. A coiled-coil region spans residues 161 to 503 (AGVAEFDRKI…ETQRQVWREA (343 aa)). The region spanning 518 to 630 (QGVHGLISQL…VFRSLELARR (113 aa)) is the SMC hinge domain. Coiled-coil stretches lie at residues 672–901 (ELAE…LQQR) and 946–1010 (DLSL…DCDT).

This sequence belongs to the SMC family. Homodimer.

Its subcellular location is the cytoplasm. In terms of biological role, required for chromosome condensation and partitioning. In Gloeobacter violaceus (strain ATCC 29082 / PCC 7421), this protein is Chromosome partition protein Smc.